A 209-amino-acid chain; its full sequence is Floral homeotic protein GLOBOSA (209 aa).

Residues 3 to 57 (RGKIEIKRIENSSNRQVTYSKRRNGILKKAKEISVLCDARVSVIIFASSGKMHEF) enclose the MADS-box domain. A K-box domain is found at 82–173 (HENLDNEINK…QLEIASMNRN (92 aa)).

In terms of tissue distribution, expressed mainly in floral organs and, within the flower, expression is restricted to petals and stamens.

The protein localises to the nucleus. In terms of biological role, transcription factor involved in the genetic control of flower development. Acts in conjunction with DEFICIENS (defA). In Nicotiana tabacum (Common tobacco), this protein is Floral homeotic protein GLOBOSA (GLO).